The primary structure comprises 1011 residues: Rap guanine nucleotide exchange factor 4 (1011 aa).

One can recognise a DEP domain in the interval 216–291; it reads SRAPHMIRDR…DKYLFYRFLD (76 aa). Residues 422 to 425 and 432 to 433 each bind 3',5'-cyclic AMP; these read GKLA and RA. An N-terminal Ras-GEF domain is found at 496-634; it reads QKYTVMSGTP…ELEKIVKQIS (139 aa). Residues 772 to 1009 form the Ras-GEF domain; that stretch reads SSKDLAYQMT…SQMSHRLEPR (238 aa).

Interacts with RAP1B, RIMS1 and RIMS2. Probably part of a complex with RIMS2 and GTP-activated RAB3A. In terms of tissue distribution, expressed in cerebellum, pituitary, adrenal gland and liver.

It localises to the cytoplasm. It is found in the membrane. Guanine nucleotide exchange factor (GEF) for RAP1A, RAP1B and RAP2A small GTPases that is activated by binding cAMP. Seems not to activate RAB3A. Involved in cAMP-dependent, PKA-independent exocytosis through interaction with RIMS2. The protein is Rap guanine nucleotide exchange factor 4 (Rapgef4) of Mus musculus (Mouse).